A 216-amino-acid chain; its full sequence is Probable nicotinate-nucleotide adenylyltransferase (216 aa).

It belongs to the NadD family.

It catalyses the reaction nicotinate beta-D-ribonucleotide + ATP + H(+) = deamido-NAD(+) + diphosphate. It functions in the pathway cofactor biosynthesis; NAD(+) biosynthesis; deamido-NAD(+) from nicotinate D-ribonucleotide: step 1/1. Its function is as follows. Catalyzes the reversible adenylation of nicotinate mononucleotide (NaMN) to nicotinic acid adenine dinucleotide (NaAD). This is Probable nicotinate-nucleotide adenylyltransferase from Buchnera aphidicola subsp. Schizaphis graminum (strain Sg).